The following is a 285-amino-acid chain: Small ribosomal subunit protein uS2 (285 aa).

The interval 231–285 (GGKSGQAAAEPMAEWERELLEQHNAQQAEQAEAPAAEAPAEPAEAPAAEAAPQGE) is disordered. Low complexity predominate over residues 255–285 (AQQAEQAEAPAAEAPAEPAEAPAAEAAPQGE).

Belongs to the universal ribosomal protein uS2 family.

This chain is Small ribosomal subunit protein uS2, found in Micrococcus luteus (strain ATCC 4698 / DSM 20030 / JCM 1464 / CCM 169 / CCUG 5858 / IAM 1056 / NBRC 3333 / NCIMB 9278 / NCTC 2665 / VKM Ac-2230) (Micrococcus lysodeikticus).